The following is a 243-amino-acid chain: Carboxy-S-adenosyl-L-methionine synthase (243 aa).

S-adenosyl-L-methionine contacts are provided by residues tyrosine 35, 68-70, 92-93, and arginine 199; these read GCS and DN.

This sequence belongs to the class I-like SAM-binding methyltransferase superfamily. Cx-SAM synthase family. Homodimer.

The enzyme catalyses prephenate + S-adenosyl-L-methionine = carboxy-S-adenosyl-L-methionine + 3-phenylpyruvate + H2O. Functionally, catalyzes the conversion of S-adenosyl-L-methionine (SAM) to carboxy-S-adenosyl-L-methionine (Cx-SAM). In Helicobacter pylori (strain P12), this protein is Carboxy-S-adenosyl-L-methionine synthase.